We begin with the raw amino-acid sequence, 423 residues long: Serine hydroxymethyltransferase (423 aa).

121–123 (GHI) lines the (6S)-5,6,7,8-tetrahydrofolate pocket. N6-(pyridoxal phosphate)lysine is present on K227. E242 serves as a coordination point for (6S)-5,6,7,8-tetrahydrofolate.

The protein belongs to the SHMT family. In terms of assembly, homodimer. Pyridoxal 5'-phosphate serves as cofactor.

It localises to the cytoplasm. It carries out the reaction 5,10-methylenetetrahydromethanopterin + glycine + H2O = 5,6,7,8-tetrahydromethanopterin + L-serine. It participates in amino-acid biosynthesis; glycine biosynthesis; glycine from L-serine: step 1/1. Its function is as follows. Catalyzes the reversible interconversion of serine and glycine with tetrahydromethanopterin (H4MPT) serving as the one-carbon carrier. Cannot use tetrahydrofolate (THF or H4PteGlu) instead of H4MPT as the pteridine substrate. Also probably exhibits a pteridine-independent aldolase activity toward beta-hydroxyamino acids, producing glycine and aldehydes, via a retro-aldol mechanism. The polypeptide is Serine hydroxymethyltransferase (Methanothermobacter thermautotrophicus (strain ATCC 29096 / DSM 1053 / JCM 10044 / NBRC 100330 / Delta H) (Methanobacterium thermoautotrophicum)).